Consider the following 173-residue polypeptide: MPRTQNKDNFIDKTFTVMADLIVKMMPINDKAKRAYVYYRDGLSAQNAGDYAEALENYEESLKLEESPFDRSETLKNMAIIYMSNGDEDLALDTYQRALDQNSNQPSCLKNMGLIYEKRGRTAQEAGLQDEADQLFDRAADVWTQAVRLYPGGYLDIENWLKTTGRSNIDVYF.

TPR repeat units follow at residues 35-68 (AYVY…EESP), 72-105 (SETL…NSNQ), and 120-153 (GRTA…YPGG).

This sequence belongs to the Ycf3 family.

Its subcellular location is the cellular thylakoid membrane. Its function is as follows. Essential for the assembly of the photosystem I (PSI) complex. May act as a chaperone-like factor to guide the assembly of the PSI subunits. The polypeptide is Photosystem I assembly protein Ycf3 (Prochlorococcus marinus (strain MIT 9303)).